The following is a 186-amino-acid chain: UPF0301 protein APL_0232 (186 aa).

The protein belongs to the UPF0301 (AlgH) family.

This chain is UPF0301 protein APL_0232, found in Actinobacillus pleuropneumoniae serotype 5b (strain L20).